Reading from the N-terminus, the 344-residue chain is Ubiquitin-associated domain-containing protein 2 (344 aa).

An N-terminal signal peptide occupies residues 1–35 (MFTSTGSSGLYKAPLSKSLLLVPSALSLLLALLLP). Residues 36-91 (HCQKLFVYDLHAVKNDFQIWRLICGRIICLDLKDTFCSSLLIYNFRIFERRYGSRK) are Extracellular-facing. The chain crosses the membrane as a helical span at residues 92–112 (FASFLLGSWVLSALFDFLLIE). Topologically, residues 113 to 125 (AMQYFFGITAASN) are cytoplasmic. The chain crosses the membrane as a helical span at residues 126–146 (LPSGFLAPVFALFVPFYCSIP). The Extracellular portion of the chain corresponds to 147–163 (RVQVAQILGPLSITNKT). Asn161 carries an N-linked (GlcNAc...) asparagine glycan. The chain crosses the membrane as a helical span at residues 164 to 184 (LIYILGLQLFTSGSYIWIVAI). The Cytoplasmic portion of the chain corresponds to 185–344 (SGLMSGLCYD…NVATNFLLQH (160 aa)). The UBA domain maps to 304–344 (EVSEEQVARLMEMGFSRGDALEALRASNNDLNVATNFLLQH).

Interacts with FAF2. Interacts with LMBR1L. Interacts with AMFR and VCP.

The protein localises to the endoplasmic reticulum membrane. Restricts trafficking of FAF2 from the endoplasmic reticulum to lipid droplets. In association with LMBR1L and E3 ubiquitin-protein ligase AMFR, negatively regulates the canonical Wnt signaling pathway in the lymphocytes by promoting the ubiquitin-mediated degradation of CTNNB1 and Wnt receptors FZD6 and LRP6. In Homo sapiens (Human), this protein is Ubiquitin-associated domain-containing protein 2 (UBAC2).